Here is a 164-residue protein sequence, read N- to C-terminus: Glutaredoxin-2, mitochondrial (164 aa).

A mitochondrion-targeting transit peptide spans M1–G19. S20 carries the phosphoserine modification. The Glutaredoxin domain occupies V57–K157. C68 contributes to the [2Fe-2S] cluster binding site. Glutathione is bound at residue K74. Residue C77 is modified to S-glutathionyl cysteine; alternate. C77 and C80 are oxidised to a cystine. Glutathione-binding residues include Q109 and V121. A [2Fe-2S] cluster-binding site is contributed by C153.

This sequence belongs to the glutaredoxin family. As to quaternary structure, monomer; active form. Homodimer; inactive form. The homodimer is probably linked by 1 2Fe-2S cluster. As to expression, widely expressed. Expressed in brain, heart, skeletal muscle, colon, thymus, spleen, kidney, liver, small intestine, placenta and lung. Not expressed in peripheral blood leukocytes.

The protein localises to the mitochondrion. Its subcellular location is the nucleus. With respect to regulation, the 2Fe-2S present in the homodimer leads to inactivation of the enzyme. The 2Fe-2S may serve as a redox sensor: the presence of one-electron oxidants or reductants leading to the loss of the 2Fe-2S cluster, subsequent monomerization and activation of the enzyme. Unlike other glutaredoxins, it is not inhibited by oxidation of structural Cys residues. Its function is as follows. Glutathione-dependent oxidoreductase that facilitates the maintenance of mitochondrial redox homeostasis upon induction of apoptosis by oxidative stress. Involved in response to hydrogen peroxide and regulation of apoptosis caused by oxidative stress. Acts as a very efficient catalyst of monothiol reactions because of its high affinity for protein glutathione-mixed disulfides. Can receive electrons not only from glutathione (GSH), but also from thioredoxin reductase supporting both monothiol and dithiol reactions. Efficiently catalyzes both glutathionylation and deglutathionylation of mitochondrial complex I, which in turn regulates the superoxide production by the complex. Overexpression decreases the susceptibility to apoptosis and prevents loss of cardiolipin and cytochrome c release. The polypeptide is Glutaredoxin-2, mitochondrial (GLRX2) (Homo sapiens (Human)).